Consider the following 1033-residue polypeptide: uncharacterized protein (1033 aa).

Coiled-coil stretches lie at residues 212–326, 405–582, 615–771, and 797–1019; these read EIFK…KMNN, ILNN…LYKF, LEKE…LKLN, and KMKI…NIDN.

This is an uncharacterized protein from Plasmodium falciparum (isolate 3D7).